Here is a 259-residue protein sequence, read N- to C-terminus: uncharacterized protein (259 aa).

The protein to M.thermoautotrophicum MTH738.

This is an uncharacterized protein from Methanocaldococcus jannaschii (strain ATCC 43067 / DSM 2661 / JAL-1 / JCM 10045 / NBRC 100440) (Methanococcus jannaschii).